A 97-amino-acid polypeptide reads, in one-letter code: Small ribosomal subunit protein bS16c (97 aa).

This sequence belongs to the bacterial ribosomal protein bS16 family.

The protein localises to the plastid. Its subcellular location is the chloroplast. The protein is Small ribosomal subunit protein bS16c of Piper cenocladum (Ant piper).